The sequence spans 860 residues: Leucine--tRNA ligase (860 aa).

The 'HIGH' region signature appears at 42–52 (PYPSGRLHMGH). A 'KMSKS' region motif is present at residues 619–623 (KMSKS). Residue Lys622 participates in ATP binding.

Belongs to the class-I aminoacyl-tRNA synthetase family.

The protein localises to the cytoplasm. It carries out the reaction tRNA(Leu) + L-leucine + ATP = L-leucyl-tRNA(Leu) + AMP + diphosphate. This chain is Leucine--tRNA ligase, found in Yersinia pseudotuberculosis serotype I (strain IP32953).